Here is a 147-residue protein sequence, read N- to C-terminus: Small ribosomal subunit protein uS12 (147 aa).

The protein belongs to the universal ribosomal protein uS12 family. In terms of assembly, part of the 30S ribosomal subunit.

In terms of biological role, with S4 and S5 plays an important role in translational accuracy. Located at the interface of the 30S and 50S subunits. The protein is Small ribosomal subunit protein uS12 of Pyrobaculum calidifontis (strain DSM 21063 / JCM 11548 / VA1).